A 367-amino-acid polypeptide reads, in one-letter code: Leu/Ile/Val-binding protein BraC3 (367 aa).

Positions 1–22 (MTLKTLTATLVASLAFAPLAHA) are cleaved as a signal peptide.

This sequence belongs to the leucine-binding protein family. As to quaternary structure, the complex is composed of two ATP-binding proteins (BraF and BraG), two transmembrane proteins (BraD and BraE) and a solute-binding protein (BraC or BraC3).

It localises to the periplasm. Functionally, part of the ABC transporter complex BraDEFGC/C3 involved in transport of branched-chain amino acids Leu, Ile and Val (LIV). Essential for the development of bacteroids, the differentiated legume-symbiotic forms of this bacterium, and for the effective N(2) fixation by them. The polypeptide is Leu/Ile/Val-binding protein BraC3 (Rhizobium johnstonii (strain DSM 114642 / LMG 32736 / 3841) (Rhizobium leguminosarum bv. viciae)).